We begin with the raw amino-acid sequence, 328 residues long: Phosphatidylglycerol--prolipoprotein diacylglyceryl transferase (328 aa).

3 helical membrane passes run Val15–Ser35, Phe58–Tyr78, and Gly106–Thr126. Arg156 lines the a 1,2-diacyl-sn-glycero-3-phospho-(1'-sn-glycerol) pocket. Transmembrane regions (helical) follow at residues Gly242–Leu262 and Ile289–Val309.

Belongs to the Lgt family.

It localises to the cell inner membrane. It carries out the reaction L-cysteinyl-[prolipoprotein] + a 1,2-diacyl-sn-glycero-3-phospho-(1'-sn-glycerol) = an S-1,2-diacyl-sn-glyceryl-L-cysteinyl-[prolipoprotein] + sn-glycerol 1-phosphate + H(+). Its pathway is protein modification; lipoprotein biosynthesis (diacylglyceryl transfer). Functionally, catalyzes the transfer of the diacylglyceryl group from phosphatidylglycerol to the sulfhydryl group of the N-terminal cysteine of a prolipoprotein, the first step in the formation of mature lipoproteins. This Borrelia garinii subsp. bavariensis (strain ATCC BAA-2496 / DSM 23469 / PBi) (Borreliella bavariensis) protein is Phosphatidylglycerol--prolipoprotein diacylglyceryl transferase.